Consider the following 360-residue polypeptide: Cytoplasmic envelopment protein 2 (360 aa).

Belongs to the herpesviridae cytoplasmic envelopment protein 2 family. As to quaternary structure, interacts with cytoplasmic envelopment protein 3 and with the capsid.

The protein localises to the virion tegument. Its subcellular location is the host cytoplasm. It localises to the host nucleus. In terms of biological role, plays a critical role in cytoplasmic virus egress. Participates in the final step of tegumentation and envelope acquisition within the host cytoplasm by directly interacting with the capsid. Upon virion binding to target cell, a signaling cascade is triggered to disrupt the interaction with the capsid, thereby preparing capsid uncoating. In Gallus gallus (Chicken), this protein is Cytoplasmic envelopment protein 2 (MDV028).